A 585-amino-acid chain; its full sequence is Glutamate decarboxylase 2 (585 aa).

Residues 1 to 24 are disordered; it reads MASPGSGFWSFGSEDGSADPENPG. A phosphoserine mark is found at serine 3, serine 6, serine 10, and serine 13. 2 S-palmitoyl cysteine lipidation sites follow: cysteine 30 and cysteine 45. 181–183 is a binding site for substrate; the sequence is QLS. N6-(pyridoxal phosphate)lysine is present on lysine 396. Arginine 558 lines the substrate pocket.

Belongs to the group II decarboxylase family. Homodimer. Requires pyridoxal 5'-phosphate as cofactor. In terms of processing, phosphorylated; which does not affect kinetic parameters or subcellular location. Palmitoylated; which is required for presynaptic clustering.

It localises to the cytoplasm. It is found in the cytosol. Its subcellular location is the cytoplasmic vesicle. The protein localises to the presynaptic cell membrane. The protein resides in the golgi apparatus membrane. The enzyme catalyses L-glutamate + H(+) = 4-aminobutanoate + CO2. Its function is as follows. Catalyzes the production of GABA. The sequence is that of Glutamate decarboxylase 2 (Gad2) from Mus musculus (Mouse).